The following is a 503-amino-acid chain: MKWLKRLTVIVGTFYRYRLAGLCASLMGSGWICALLKMMPQSSKLKNEPPAVRLRLALESLGPIFIKFGQVLSTRPDLIPHDYAVELAKLQDKVPPFDARLSREQIEKSLGQSIEKLYAEFETEPIASASIAQVHKARLHSGERVAVKVLRPNLLPLIEQDLSLMRFGAAWVERLFSDGRRLKPLEVVAEFDKYLHDELDLMREAANAGQLGRNFHNSNMLIVPKVFYDYCTSDVLTIEWMDGTPVADIAKLKADGIDLHKLADYGVEIFFTQVFRDGFFHADMHPGNILVAADNRYIALDFGIVGTLTDYDKRYLAINFLAFFNRDYRRVATAHIESGWVPADTRAEELEAAVRAVCEPVFNKPISQISFGLVLMRLFEVSRRFNVEIQPQLVLLQKTLLNIEGLGRQLDPDLDLWKTAKPFLVKWMNGQVGPKALWRNLKNEAPDWAQIIPSLPRKISALIDENRQQEMRDAYIHLVKVQQRQSLWLAVIAVVLLLILLLK.

Residues 13-35 (TFYRYRLAGLCASLMGSGWICAL) form a helical membrane-spanning segment. Positions 120–491 (EFETEPIASA…QQRQSLWLAV (372 aa)) constitute a Protein kinase domain. Residues 126 to 134 (IASASIAQV) and lysine 148 contribute to the ATP site. Aspartate 283 serves as the catalytic Proton acceptor. Residues 485-502 (QSLWLAVIAVVLLLILLL) traverse the membrane as a helical segment.

Belongs to the ABC1 family. UbiB subfamily.

The protein resides in the cell inner membrane. It participates in cofactor biosynthesis; ubiquinone biosynthesis [regulation]. Functionally, is probably a protein kinase regulator of UbiI activity which is involved in aerobic coenzyme Q (ubiquinone) biosynthesis. The polypeptide is Probable protein kinase UbiB (Neisseria meningitidis serogroup A / serotype 4A (strain DSM 15465 / Z2491)).